A 400-amino-acid chain; its full sequence is Outer membrane protein alpha (400 aa).

Residues 1-20 form the signal peptide; sequence MKRVLLTVAMLSVFFSAMFA. In terms of domain architecture, SLH spans 21–81; sequence FFPDVPKDHW…DFIEQKMLAG (61 aa). A coiled-coil region spans residues 85-379; it reads DLAQVVGNLS…ESVKAYNRNL (295 aa). 3 consecutive repeat copies span residues 208–232, 251–275, and 326–350. Residues 208–350 form a 3 X 25 AA approximate repeat region; the sequence is VNLHEKDIIN…SSLEEDLNMK (143 aa). Residues 380 to 400 traverse the membrane as a helical segment; that stretch reads SILTGAFFGILGLILIAISGK.

Homotetramer.

Its subcellular location is the cell outer membrane. Its function is as follows. Links the outer membrane to the inner membrane. Long fibrous protein that could serve to separate the two membranes. The protein is Outer membrane protein alpha (omp-alpha) of Thermotoga maritima (strain ATCC 43589 / DSM 3109 / JCM 10099 / NBRC 100826 / MSB8).